The primary structure comprises 610 residues: MTIKFLSESTINRIAAGEVIERPASVVKELVENAVDASSTKINIILERAGKNLIIISDDGIGMTDKELEIAVERHTTSKLDESDFLKIHTFGFRGEALPSIAAISKMLITSKKRGTDKAFQIKLIGGNEKQITISVHNEGTKIEIRDLFFATPARLKFLRADKTELAVTVDIVKKIALAHPEISFSLTNDSKNLLKLKGQNKDAETNLKQRIIDVIGDDFIKNAAYIDFKILDFSICGYTSIPTYNRASSEDQFLFINNRPVKDKLLQVALRVAYQDYLARDRYPLCAIFLQIDPQFVDVNVHPAKAEVRFHDPNYVRNLLIEAIKNALANKSHVTSTTIASDTLKLFKNPLINKQPTINKEVNVNSKSVDYRSYSSANTPKILQNHICQKLIDTLPHAKVEQEVENRIEHKQQIHKQYKLGAAKAQLHTTYIISQTEDSIVITDQHAAHERLGYEKIKSYIKMDELIKQRLLIPEIVELPNEKRADCLYDHREKLSKLGLTLEKFGEKSIIVTEIPNILGDVNVQKLIQDLADHLSDFSENVALMELIEHVTETYACHYSIRAGRKLSADEMNALLRQMENTPFSGQCNHGRPTYIELKLKDIERLFGR.

The protein belongs to the DNA mismatch repair MutL/HexB family.

Functionally, this protein is involved in the repair of mismatches in DNA. It is required for dam-dependent methyl-directed DNA mismatch repair. May act as a 'molecular matchmaker', a protein that promotes the formation of a stable complex between two or more DNA-binding proteins in an ATP-dependent manner without itself being part of a final effector complex. This chain is DNA mismatch repair protein MutL, found in Rickettsia canadensis (strain McKiel).